Here is a 443-residue protein sequence, read N- to C-terminus: MQPSRNFDDLKFSSIHRRILLWGSGGPFLDGYVLVMIGVALEQLTPALKLDADWIGLLGAGTLAGLFVGTSLFGYISDKVGRRKMFLIDIIAIGVISVATMFVSSPVELLVMRVLIGIVIGADYPIATSMITEFSSTRQRAFSISFIAAMWYVGATCADLVGYWLYDVEGGWRWMLGSAAIPCLLILIGRFELPESPRWLLRKGRVKECEEMMIKLFGEPVAFDEEQPQQTRFRDLFNRRHFPFVLFVAAIWTCQVIPMFAIYTFGPQIVGLLGLGVGKNAALGNVVISLFFMLGCIPPMLWLNTAGRRPLLIGSFAMMTLALAVLGLIPDMGIWLVVMAFAVYAFFSGGPGNLQWLYPNELFPTDIRASAVGVIMSLSRIGTIVSTWALPIFINNYGISNTMLMGAGISLFGLLISVAFAPETRGMSLAQTSNMTIRGQRMG.

At 1 to 18 (MQPSRNFDDLKFSSIHRR) the chain is on the cytoplasmic side. Residues 19-39 (ILLWGSGGPFLDGYVLVMIGV) traverse the membrane as a helical segment. Residues 40–53 (ALEQLTPALKLDAD) lie on the Periplasmic side of the membrane. Residues 54-74 (WIGLLGAGTLAGLFVGTSLFG) form a helical membrane-spanning segment. The Cytoplasmic segment spans residues 75 to 84 (YISDKVGRRK). Residues 85–105 (MFLIDIIAIGVISVATMFVSS) traverse the membrane as a helical segment. The Periplasmic portion of the chain corresponds to 106–113 (PVELLVMR). A helical transmembrane segment spans residues 114–134 (VLIGIVIGADYPIATSMITEF). At 135–145 (SSTRQRAFSIS) the chain is on the cytoplasmic side. A helical transmembrane segment spans residues 146-166 (FIAAMWYVGATCADLVGYWLY). The Periplasmic portion of the chain corresponds to 167 to 173 (DVEGGWR). Residues 174–194 (WMLGSAAIPCLLILIGRFELP) traverse the membrane as a helical segment. Over 195–241 (ESPRWLLRKGRVKECEEMMIKLFGEPVAFDEEQPQQTRFRDLFNRRH) the chain is Cytoplasmic. A helical membrane pass occupies residues 242 to 262 (FPFVLFVAAIWTCQVIPMFAI). Residues 263-282 (YTFGPQIVGLLGLGVGKNAA) lie on the Periplasmic side of the membrane. The helical transmembrane segment at 283-303 (LGNVVISLFFMLGCIPPMLWL) threads the bilayer. Residues 304-309 (NTAGRR) lie on the Cytoplasmic side of the membrane. A helical transmembrane segment spans residues 310–329 (PLLIGSFAMMTLALAVLGLI). Topologically, residues 330–334 (PDMGI) are periplasmic. The helical transmembrane segment at 335–357 (WLVVMAFAVYAFFSGGPGNLQWL) threads the bilayer. At 358-373 (YPNELFPTDIRASAVG) the chain is on the cytoplasmic side. A helical transmembrane segment spans residues 374–394 (VIMSLSRIGTIVSTWALPIFI). At 395–401 (NNYGISN) the chain is on the periplasmic side. Residues 402–422 (TMLMGAGISLFGLLISVAFAP) form a helical membrane-spanning segment. Topologically, residues 423-443 (ETRGMSLAQTSNMTIRGQRMG) are cytoplasmic.

This sequence belongs to the major facilitator superfamily. Sugar transporter (TC 2.A.1.1) family.

The protein resides in the cell inner membrane. The sequence is that of Putative metabolite transport protein YaaU (yaaU) from Escherichia coli (strain K12).